Reading from the N-terminus, the 504-residue chain is Probable alpha-L-arabinofuranosidase C (504 aa).

N-linked (GlcNAc...) asparagine glycans are attached at residues Asn152, Asn181, Asn269, and Asn467.

It belongs to the glycosyl hydrolase 51 family.

The protein resides in the secreted. The catalysed reaction is Hydrolysis of terminal non-reducing alpha-L-arabinofuranoside residues in alpha-L-arabinosides.. It functions in the pathway glycan metabolism; L-arabinan degradation. Its function is as follows. Alpha-L-arabinofuranosidase involved in the degradation of arabinoxylan, a major component of plant hemicellulose. Acts only on small linear 1,5-alpha-linked L-arabinofuranosyl oligosaccharides. The chain is Probable alpha-L-arabinofuranosidase C (abfC) from Aspergillus terreus (strain NIH 2624 / FGSC A1156).